A 325-amino-acid polypeptide reads, in one-letter code: uncharacterized protein (325 aa).

Disordered stretches follow at residues 32–65 (LSTPVYRKKSRRSVSQSRPTSIIEPPKRSIVPPI) and 99–152 (GDSL…ASSG). The region spanning 153–291 (LVPSLNRLRI…LFTGVRDGYY (139 aa)) is the Globin domain.

This is an uncharacterized protein from Caenorhabditis elegans.